Consider the following 163-residue polypeptide: Extracellular giant hemoglobin major globin subunit B2 (163 aa).

An N-terminal signal peptide occupies residues 1-16 (MIALFVLMGLMAAASA). Residues 19–163 (CCSSEDRANV…RIANGISAGL (145 aa)) form the Globin domain. An intrachain disulfide couples Cys-20 to Cys-151. Cys-83 is a hydrogen sulfide binding site. His-114 provides a ligand contact to heme b.

This sequence belongs to the globin family. The 400 kDa hemoglobin consists of a spherical 24-mer arranged as a double layer of dome-shaped dodecamers. Each dodecamer is composed of the 3-fold trimer of the tetramer A1-A2-B1-B2 having one intra-tetramer (A1-B2) disulfide bond and one inter-tetramer (B1-B2) disulfide bond per tetramer.

It localises to the secreted. The extracellular giant hemoglobin is able to bind and transport oxygen and hydrosulfide simultaneously and reversibly at two different sites. This chain is Extracellular giant hemoglobin major globin subunit B2 (ghbB2), found in Oligobrachia mashikoi (Beard worm).